Reading from the N-terminus, the 356-residue chain is Torsin-like protein (356 aa).

Positions Met-1 to Thr-18 are cleaved as a signal peptide. Gly-110–Asn-117 is a binding site for ATP. Residues Asn-125 and Asn-250 are each glycosylated (N-linked (GlcNAc...) asparagine).

It belongs to the ClpA/ClpB family. Torsin subfamily.

The protein resides in the endoplasmic reticulum lumen. Its function is as follows. May serve as a molecular chaperone assisting in the proper folding of secreted and/or membrane proteins. The polypeptide is Torsin-like protein (ooc-5) (Caenorhabditis elegans).